A 219-amino-acid chain; its full sequence is Resolvase (219 aa).

The Resolvase/invertase-type recombinase catalytic domain occupies 15-159 (VARIYLRAST…EDRRERQRQG (145 aa)). Ser23 acts as the O-(5'-phospho-DNA)-serine intermediate in catalysis.

This sequence belongs to the site-specific recombinase resolvase family.

Involved in plasmid partition. The sequence is that of Resolvase (parA) from Escherichia coli.